The chain runs to 415 residues: Peptide chain release factor subunit 1 (415 aa).

This sequence belongs to the eukaryotic release factor 1 family. In terms of assembly, heterodimer of two subunits, one of which binds GTP.

It is found in the cytoplasm. Its function is as follows. Directs the termination of nascent peptide synthesis (translation) in response to the termination codons UAA, UAG and UGA. In Methanosarcina mazei (strain ATCC BAA-159 / DSM 3647 / Goe1 / Go1 / JCM 11833 / OCM 88) (Methanosarcina frisia), this protein is Peptide chain release factor subunit 1.